A 350-amino-acid chain; its full sequence is 4-hydroxy-3-methylbut-2-enyl diphosphate reductase (350 aa).

A [4Fe-4S] cluster-binding site is contributed by Cys-19. Residues His-48 and His-84 each coordinate (2E)-4-hydroxy-3-methylbut-2-enyl diphosphate. His-48 and His-84 together coordinate dimethylallyl diphosphate. His-48 and His-84 together coordinate isopentenyl diphosphate. Cys-106 is a [4Fe-4S] cluster binding site. Position 134 (His-134) interacts with (2E)-4-hydroxy-3-methylbut-2-enyl diphosphate. His-134 lines the dimethylallyl diphosphate pocket. His-134 contacts isopentenyl diphosphate. Catalysis depends on Glu-136, which acts as the Proton donor. Thr-175 is a (2E)-4-hydroxy-3-methylbut-2-enyl diphosphate binding site. Cys-205 lines the [4Fe-4S] cluster pocket. 4 residues coordinate (2E)-4-hydroxy-3-methylbut-2-enyl diphosphate: Ser-233, Ser-234, Asn-235, and Ser-278. Ser-233, Ser-234, Asn-235, and Ser-278 together coordinate dimethylallyl diphosphate. Ser-233, Ser-234, Asn-235, and Ser-278 together coordinate isopentenyl diphosphate.

The protein belongs to the IspH family. It depends on [4Fe-4S] cluster as a cofactor.

It carries out the reaction isopentenyl diphosphate + 2 oxidized [2Fe-2S]-[ferredoxin] + H2O = (2E)-4-hydroxy-3-methylbut-2-enyl diphosphate + 2 reduced [2Fe-2S]-[ferredoxin] + 2 H(+). The catalysed reaction is dimethylallyl diphosphate + 2 oxidized [2Fe-2S]-[ferredoxin] + H2O = (2E)-4-hydroxy-3-methylbut-2-enyl diphosphate + 2 reduced [2Fe-2S]-[ferredoxin] + 2 H(+). It participates in isoprenoid biosynthesis; dimethylallyl diphosphate biosynthesis; dimethylallyl diphosphate from (2E)-4-hydroxy-3-methylbutenyl diphosphate: step 1/1. Its pathway is isoprenoid biosynthesis; isopentenyl diphosphate biosynthesis via DXP pathway; isopentenyl diphosphate from 1-deoxy-D-xylulose 5-phosphate: step 6/6. Its function is as follows. Catalyzes the conversion of 1-hydroxy-2-methyl-2-(E)-butenyl 4-diphosphate (HMBPP) into a mixture of isopentenyl diphosphate (IPP) and dimethylallyl diphosphate (DMAPP). Acts in the terminal step of the DOXP/MEP pathway for isoprenoid precursor biosynthesis. The protein is 4-hydroxy-3-methylbut-2-enyl diphosphate reductase of Brucella anthropi (strain ATCC 49188 / DSM 6882 / CCUG 24695 / JCM 21032 / LMG 3331 / NBRC 15819 / NCTC 12168 / Alc 37) (Ochrobactrum anthropi).